Reading from the N-terminus, the 261-residue chain is uncharacterized protein (261 aa).

The signal sequence occupies residues 1–22 (MKSIKRIGLCISLLILIIFVTS). A lipid anchor (N-palmitoyl cysteine) is attached at cysteine 23. Cysteine 23 carries S-diacylglycerol cysteine lipidation.

It belongs to the staphylococcal tandem lipoprotein family.

Its subcellular location is the cell membrane. This is an uncharacterized protein from Staphylococcus aureus (strain USA300).